The chain runs to 72 residues: MNYLVMISFALLLVIGVESVRDGYFVEPDNCLVYCMPSPEICDRGCKRYGATSGFCKEFSKGENFCWCKGLR.

Positions 1–19 (MNYLVMISFALLLVIGVES) are cleaved as a signal peptide. In terms of domain architecture, LCN-type CS-alpha/beta spans 21–72 (RDGYFVEPDNCLVYCMPSPEICDRGCKRYGATSGFCKEFSKGENFCWCKGLR). Disulfide bonds link Cys-35–Cys-56, Cys-42–Cys-66, and Cys-46–Cys-68. Arg-72 is a propeptide (removed by a carboxypeptidase).

This sequence belongs to the long (3 C-C) scorpion toxin superfamily. Expressed by the venom gland.

The protein resides in the secreted. The chain is Probable neurotoxin pcD-996 from Androctonus australis (Sahara scorpion).